The sequence spans 761 residues: Protein transport protein SEC23 C (761 aa).

Residues C60, C63, C82, and C85 each contribute to the Zn(2+) site. The segment at 60–85 is zinc finger-like; that stretch reads CRTCRSVLNPYSVVDFSACNWGCPFC.

The protein belongs to the SEC23/SEC24 family. SEC24 subfamily. As to quaternary structure, component of the coat protein complex II (COPII), composed of at least five proteins: the Sec23/24 complex, the Sec13/31 complex and Sar1.

The protein localises to the cytoplasmic vesicle. Its subcellular location is the COPII-coated vesicle membrane. The protein resides in the endoplasmic reticulum membrane. It localises to the membrane. Its function is as follows. Component of the coat protein complex II (COPII) which promotes the formation of transport vesicles from the endoplasmic reticulum (ER). The coat has two main functions, the physical deformation of the endoplasmic reticulum membrane into vesicles and the selection of cargo molecules. The protein is Protein transport protein SEC23 C of Arabidopsis thaliana (Mouse-ear cress).